The sequence spans 153 residues: Xanthine-guanine phosphoribosyltransferase (153 aa).

5-phospho-alpha-D-ribose 1-diphosphate contacts are provided by residues 37 to 38 (RG), Arg-69, and 88 to 96 (DDLVDTGGT). Residue Arg-69 participates in GMP binding. Asp-89 contributes to the Mg(2+) binding site. Residues Asp-92 and Ile-135 each coordinate guanine. Asp-92 and Ile-135 together coordinate xanthine. Residues 92–96 (DTGGT) and 134–135 (WI) each bind GMP.

This sequence belongs to the purine/pyrimidine phosphoribosyltransferase family. XGPT subfamily. As to quaternary structure, homotetramer. Requires Mg(2+) as cofactor.

It localises to the cell inner membrane. It carries out the reaction GMP + diphosphate = guanine + 5-phospho-alpha-D-ribose 1-diphosphate. The catalysed reaction is XMP + diphosphate = xanthine + 5-phospho-alpha-D-ribose 1-diphosphate. It catalyses the reaction IMP + diphosphate = hypoxanthine + 5-phospho-alpha-D-ribose 1-diphosphate. The protein operates within purine metabolism; GMP biosynthesis via salvage pathway; GMP from guanine: step 1/1. It functions in the pathway purine metabolism; XMP biosynthesis via salvage pathway; XMP from xanthine: step 1/1. In terms of biological role, purine salvage pathway enzyme that catalyzes the transfer of the ribosyl-5-phosphate group from 5-phospho-alpha-D-ribose 1-diphosphate (PRPP) to the N9 position of the 6-oxopurines guanine and xanthine to form the corresponding ribonucleotides GMP (guanosine 5'-monophosphate) and XMP (xanthosine 5'-monophosphate), with the release of PPi. To a lesser extent, also acts on hypoxanthine. This is Xanthine-guanine phosphoribosyltransferase from Photorhabdus laumondii subsp. laumondii (strain DSM 15139 / CIP 105565 / TT01) (Photorhabdus luminescens subsp. laumondii).